Here is a 342-residue protein sequence, read N- to C-terminus: Ferredoxin--NADP reductase (342 aa).

Residues Cys-17, Asp-36, Gln-44, Tyr-49, Ile-89, Phe-124, Asp-289, and Thr-330 each coordinate FAD.

Belongs to the ferredoxin--NADP reductase type 2 family. As to quaternary structure, homodimer. FAD is required as a cofactor.

The catalysed reaction is 2 reduced [2Fe-2S]-[ferredoxin] + NADP(+) + H(+) = 2 oxidized [2Fe-2S]-[ferredoxin] + NADPH. The polypeptide is Ferredoxin--NADP reductase (Rhodopseudomonas palustris (strain BisB18)).